Reading from the N-terminus, the 338-residue chain is Uroporphyrinogen decarboxylase (338 aa).

Substrate is bound by residues 27-31 (RQAGR), Asp77, Tyr151, Ser203, and His317.

It belongs to the uroporphyrinogen decarboxylase family. Homodimer.

The protein localises to the cytoplasm. The catalysed reaction is uroporphyrinogen III + 4 H(+) = coproporphyrinogen III + 4 CO2. It functions in the pathway porphyrin-containing compound metabolism; protoporphyrin-IX biosynthesis; coproporphyrinogen-III from 5-aminolevulinate: step 4/4. Functionally, catalyzes the decarboxylation of four acetate groups of uroporphyrinogen-III to yield coproporphyrinogen-III. This Wolbachia pipientis wMel protein is Uroporphyrinogen decarboxylase.